The chain runs to 396 residues: Acetyl-CoA acetyltransferase (396 aa).

Cys89 acts as the Acyl-thioester intermediate in catalysis. CoA-binding positions include 223–225 (RKS) and Ser249. Catalysis depends on proton acceptor residues His352 and Cys382.

This sequence belongs to the thiolase-like superfamily. Thiolase family.

It is found in the cytoplasm. The catalysed reaction is 2 acetyl-CoA = acetoacetyl-CoA + CoA. It functions in the pathway lipid metabolism; butanoate metabolism. Its function is as follows. Involved in syntrophic growth of S.wolfei with butyrate, as part of the butyrate oxidation pathway. Probably catalyzes the beta-keto thiolysis of acetoacetyl-CoA, leading to 2 acetyl-CoA molecules. This chain is Acetyl-CoA acetyltransferase, found in Syntrophomonas wolfei subsp. wolfei (strain DSM 2245B / Goettingen).